The sequence spans 255 residues: tRNA (guanine-N(1)-)-methyltransferase (255 aa).

Residues glycine 113 and 133–138 (IGDYVL) contribute to the S-adenosyl-L-methionine site.

Belongs to the RNA methyltransferase TrmD family. As to quaternary structure, homodimer.

The protein resides in the cytoplasm. The catalysed reaction is guanosine(37) in tRNA + S-adenosyl-L-methionine = N(1)-methylguanosine(37) in tRNA + S-adenosyl-L-homocysteine + H(+). Its function is as follows. Specifically methylates guanosine-37 in various tRNAs. This is tRNA (guanine-N(1)-)-methyltransferase from Salmonella schwarzengrund (strain CVM19633).